A 660-amino-acid chain; its full sequence is Probable rhamnogalacturonate lyase B (660 aa).

The first 20 residues, 1-20 (MRLSVSLGLASLWTAIGATA), serve as a signal peptide directing secretion. Asn22, Asn27, Asn109, Asn142, Asn238, Asn284, Asn432, Asn492, Asn532, Asn594, and Asn635 each carry an N-linked (GlcNAc...) asparagine glycan.

Belongs to the polysaccharide lyase 4 family.

The protein localises to the secreted. It carries out the reaction Endotype eliminative cleavage of L-alpha-rhamnopyranosyl-(1-&gt;4)-alpha-D-galactopyranosyluronic acid bonds of rhamnogalacturonan I domains in ramified hairy regions of pectin leaving L-rhamnopyranose at the reducing end and 4-deoxy-4,5-unsaturated D-galactopyranosyluronic acid at the non-reducing end.. Functionally, pectinolytic enzymes consist of four classes of enzymes: pectin lyase, polygalacturonase, pectin methylesterase and rhamnogalacturonase. Degrades the rhamnogalacturonan I (RG-I) backbone of pectin. In Aspergillus terreus (strain NIH 2624 / FGSC A1156), this protein is Probable rhamnogalacturonate lyase B (rglB).